A 192-amino-acid polypeptide reads, in one-letter code: MRLIFLGPPGAGKGTQAKHLTERYGIPQLSTGDMLRAAVAQATEVGKRAKAVMDAGQLVSDEIVNEIVSDRIDAPDCAKGFILDGYPRTVPQAVALDRMLEEKNLKLDAVIELKVDEAALVRRMENRVAETVAAGGTVRSDDNPEAFRRRLQEYREKTAPLSEHYARTGRLKTVDGMADVKTVTAEIEKILA.

Residue 10–15 (GAGKGT) participates in ATP binding. The NMP stretch occupies residues 30–59 (STGDMLRAAVAQATEVGKRAKAVMDAGQLV). Residues Thr31, Arg36, 57-59 (QLV), 85-88 (GYPR), and Gln92 contribute to the AMP site. An LID region spans residues 126-142 (NRVAETVAAGGTVRSDD). Residue Arg127 coordinates ATP. Residues Arg139 and Arg150 each coordinate AMP. Residue Ala178 coordinates ATP.

The protein belongs to the adenylate kinase family. In terms of assembly, monomer.

The protein resides in the cytoplasm. It carries out the reaction AMP + ATP = 2 ADP. The protein operates within purine metabolism; AMP biosynthesis via salvage pathway; AMP from ADP: step 1/1. Functionally, catalyzes the reversible transfer of the terminal phosphate group between ATP and AMP. Plays an important role in cellular energy homeostasis and in adenine nucleotide metabolism. The protein is Adenylate kinase of Sinorhizobium medicae (strain WSM419) (Ensifer medicae).